The primary structure comprises 166 residues: Transcriptional repressor NrdR (166 aa).

Residues 3 to 34 fold into a zinc finger; it reads CPFCRNPDSRVVDSRMADDGSSIRRRRQCPEC. The 91-residue stretch at 46-136 folds into the ATP-cone domain; the sequence is LSVIKRSGVG…VYQAFESLED (91 aa).

The protein belongs to the NrdR family. The cofactor is Zn(2+).

Its function is as follows. Negatively regulates transcription of bacterial ribonucleotide reductase nrd genes and operons by binding to NrdR-boxes. This chain is Transcriptional repressor NrdR, found in Paenarthrobacter aurescens (strain TC1).